A 160-amino-acid polypeptide reads, in one-letter code: SsrA-binding protein (160 aa).

The protein belongs to the SmpB family.

Its subcellular location is the cytoplasm. Functionally, required for rescue of stalled ribosomes mediated by trans-translation. Binds to transfer-messenger RNA (tmRNA), required for stable association of tmRNA with ribosomes. tmRNA and SmpB together mimic tRNA shape, replacing the anticodon stem-loop with SmpB. tmRNA is encoded by the ssrA gene; the 2 termini fold to resemble tRNA(Ala) and it encodes a 'tag peptide', a short internal open reading frame. During trans-translation Ala-aminoacylated tmRNA acts like a tRNA, entering the A-site of stalled ribosomes, displacing the stalled mRNA. The ribosome then switches to translate the ORF on the tmRNA; the nascent peptide is terminated with the 'tag peptide' encoded by the tmRNA and targeted for degradation. The ribosome is freed to recommence translation, which seems to be the essential function of trans-translation. In Pasteurella multocida (strain Pm70), this protein is SsrA-binding protein.